Reading from the N-terminus, the 638-residue chain is DNA repair protein rhp41 (638 aa).

The protein belongs to the XPC family.

It is found in the nucleus. Its function is as follows. Has a role in the nucleotide excision repair (NER) pathway. Acts in both transcription-coupled repair (TCR) which removes damage from the transcribed strand of active genes and in global genome repair (GGR) which removes damage in untranscribed DNA. Involved in the repair of UV-induced damages where it is involved in the removal of cyclobutane pyrimidine dimers (CPDs). This Schizosaccharomyces pombe (strain 972 / ATCC 24843) (Fission yeast) protein is DNA repair protein rhp41 (rhp41).